The chain runs to 232 residues: Small ribosomal subunit protein uS3 (232 aa).

The KH type-2 domain maps to 39-107 (VRQFLTKELA…PAQINIAEVR (69 aa)).

This sequence belongs to the universal ribosomal protein uS3 family. Part of the 30S ribosomal subunit. Forms a tight complex with proteins S10 and S14.

Binds the lower part of the 30S subunit head. Binds mRNA in the 70S ribosome, positioning it for translation. The sequence is that of Small ribosomal subunit protein uS3 from Erwinia tasmaniensis (strain DSM 17950 / CFBP 7177 / CIP 109463 / NCPPB 4357 / Et1/99).